The following is a 1191-amino-acid chain: Serine/threonine-protein kinase dkf-2 (1191 aa).

Disordered regions lie at residues 11–48 (YTSMPSSSTSNHRIDRLSSSSSSTFRRDDFRRHSTTTS) and 108–155 (MLSR…GGHV). Positions 123–139 (TPDDHYSNPSDKRREVP) are enriched in basic and acidic residues. Low complexity predominate over residues 140 to 150 (SIRSTSSNSSS). Phorbol-ester/DAG-type zinc fingers lie at residues 314 to 364 (PHTL…PNNC) and 466 to 531 (PHTF…AKDC). Positions 549–594 (VSEDRDDDLSLRSGSGGHKKAQNTPSAPLQGSEGSGSPGGAVVSFA) are disordered. The PH domain occupies 632–713 (LLKEGWIVHY…VYFVYSSLTD (82 aa)). The segment at 730–786 (PSTVSSTDSGYLGSSGASSSCVRSREGSTVSSTITVDRTRRGGSTTSTENSEAESES) is disordered. Positions 738 to 751 (SGYLGSSGASSSCV) are enriched in low complexity. Positions 756–765 (GSTVSSTITV) are enriched in polar residues. A compositionally biased stretch (low complexity) spans 773 to 786 (STTSTENSEAESES). Residues 891–1147 (IFAEEVLGSG…VAKAQSHIWM (257 aa)) enclose the Protein kinase domain. ATP is bound by residues 897-905 (LGSGQFGTV) and Lys920. Residue Asp1014 is the Proton acceptor of the active site. Phosphoserine is present on residues Ser1046 and Ser1050.

It belongs to the protein kinase superfamily. CAMK Ser/Thr protein kinase family. PKD subfamily. Requires Mg(2+) as cofactor. Phosphorylation on Ser-1046 is the dominant regulator of catalysis, phosphorylation on Ser-1050 has a lesser effect. Prolonged phosphorylation results in ubiquitination and degradation.

It is found in the cytoplasm. Its subcellular location is the membrane. It carries out the reaction L-seryl-[protein] + ATP = O-phospho-L-seryl-[protein] + ADP + H(+). The catalysed reaction is L-threonyl-[protein] + ATP = O-phospho-L-threonyl-[protein] + ADP + H(+). Its activity is regulated as follows. Activated by DAG and phorbol esters. Phorbol-ester/DAG-type domain 1 binds phorbol ester with low affinity. Phorbol-ester/DAG-type domain 2 binds phorbol ester with high affinity and targets the kinase to the cell periphery, enabling phosphorylation and activation by colocalized tpa-1. Both domains 1 and 2 appear to bind DAG with equal affinity so may contribute equally to translocation and activation. Converts transient diacylglycerol (DAG) signals into prolonged physiological effects, downstream of PKC. Acts in the intestine to regulate both innate immunity by promoting activation of pmk-1 and also stress response and life span by acting as an upstream, negative regulator of the daf-16 transcription factor. In Caenorhabditis briggsae, this protein is Serine/threonine-protein kinase dkf-2.